Reading from the N-terminus, the 352-residue chain is MTELELLGPRASGEPLGTAVLKAVAEDFQVDEVLDIPLSGQGEHLWLWVEKRDLNTEEAARRLARAAGVPVRSISYAGLKDRQALTRQWFSLHLPGKADPDLSRAEDASLRVLKQVRHLRKLQRGAHSANGFTLRLTALAADHQALDTRLEQLKQNGVPNYFGTQRFGHGGGNVHDALEWAARKALPEQRNVRSRLLSAGRSFLFNQLLAARVADGSWARAQVGDLLAFTDSRSFFPAGEAECADPRLAILDLHPTGPMWGEGASPAGAATAQLENAVGARQPALCQWLAQAGMDHERRILRLPIGGLTWHYPEPDILQLEFVLPAGCFATVVVREVVDLVSAGQTDSPCVF.

Residue D81 is the Nucleophile of the active site. The 147-residue stretch at 157–303 folds into the TRUD domain; sequence GVPNYFGTQR…MDHERRILRL (147 aa).

Belongs to the pseudouridine synthase TruD family.

The catalysed reaction is uridine(13) in tRNA = pseudouridine(13) in tRNA. In terms of biological role, responsible for synthesis of pseudouridine from uracil-13 in transfer RNAs. This is tRNA pseudouridine synthase D from Pseudomonas putida (strain GB-1).